The following is a 173-amino-acid chain: MKYGIVIFPPKRIQDFANSYRKRYDSHYALIPPHITLKYPFEADEEQIKKMAKELRRIAAETPPIPIKVTKFSSFYPTSNIIYLKVEPNDVLERLHEQLHSGLFAGKPEFVFVPHITIGRDLPGAEYADVYSQLKLQDVHFEETVDRFHLLYQLENGSWTVYETFIVGGKETV.

Residue H34 is the Proton donor of the active site. 2 short sequence motifs (HXTX) span residues 34 to 37 (HITL) and 115 to 118 (HITI). Residue H115 is the Proton acceptor of the active site.

The protein belongs to the 2H phosphoesterase superfamily. YjcG family.

The chain is Putative phosphoesterase GK0864 from Geobacillus kaustophilus (strain HTA426).